Consider the following 292-residue polypeptide: Nucleotide-binding protein Ldb0621 (292 aa).

14 to 21 (GMSGAGKT) contributes to the ATP binding site. 64-67 (DLRV) lines the GTP pocket.

Belongs to the RapZ-like family.

Displays ATPase and GTPase activities. The protein is Nucleotide-binding protein Ldb0621 of Lactobacillus delbrueckii subsp. bulgaricus (strain ATCC 11842 / DSM 20081 / BCRC 10696 / JCM 1002 / NBRC 13953 / NCIMB 11778 / NCTC 12712 / WDCM 00102 / Lb 14).